The primary structure comprises 361 residues: 3-dehydroquinate synthase (361 aa).

NAD(+)-binding positions include 72–77, 130–131, Lys-142, and Lys-151; these read SGEKEK and TT. Zn(2+)-binding residues include Glu-184, His-247, and His-264.

Belongs to the sugar phosphate cyclases superfamily. Dehydroquinate synthase family. The cofactor is NAD(+). Requires Co(2+) as cofactor. Zn(2+) serves as cofactor.

The protein localises to the cytoplasm. The enzyme catalyses 7-phospho-2-dehydro-3-deoxy-D-arabino-heptonate = 3-dehydroquinate + phosphate. Its pathway is metabolic intermediate biosynthesis; chorismate biosynthesis; chorismate from D-erythrose 4-phosphate and phosphoenolpyruvate: step 2/7. Catalyzes the conversion of 3-deoxy-D-arabino-heptulosonate 7-phosphate (DAHP) to dehydroquinate (DHQ). This is 3-dehydroquinate synthase from Bacillus cereus (strain ATCC 14579 / DSM 31 / CCUG 7414 / JCM 2152 / NBRC 15305 / NCIMB 9373 / NCTC 2599 / NRRL B-3711).